Here is a 532-residue protein sequence, read N- to C-terminus: MESAEPAGQARAAATKLSEAVGAALQEPRRQRRLVLVIVCVALLLDNMLYMVIVPIVPDYIAHMRGGGEGPTRTPEVWEPTLPLPTPANASAYTANTSASPTAAWPAGSALRPRYPTESEDVKIGVLFASKAILQLLVNPLSGPFIDRMSYDVPLLIGLGVMFASTVLFAFAEDYATLFAARSLQGLGSAFADTSGIAMIADKYPEEPERSRALGVALAFISFGSLVAPPFGGILYEFAGKRVPFLVLAAVSLFDALLLLAVAKPFSAAARARANLPVGTPIHRLMLDPYIAVVAGALTTCNIPLAFLEPTIATWMKHTMAASEWEMGMAWLPAFVPHVLGVYLTVRLAARYPHLQWLYGALGLAVIGASSCIVPACRSFAPLVVSLCGLCFGIALVDTALLPTLAFLVDVRHVSVYGSVYAIADISYSVAYALGPIVAGHIVHSLGFEQLSLGMGLANLLYAPVLLLLRNVGLLTRSRSERDVLLDEPPQGLYDAVRLRERPVSGQDGEPRSPPGPFDACEDDYNYYYTRS.

Topologically, residues 1 to 33 (MESAEPAGQARAAATKLSEAVGAALQEPRRQRR) are cytoplasmic. A helical membrane pass occupies residues 34–54 (LVLVIVCVALLLDNMLYMVIV). Residues 55–125 (PIVPDYIAHM…PTESEDVKIG (71 aa)) lie on the Lumenal, vesicle side of the membrane. N89 and N96 each carry an N-linked (GlcNAc...) asparagine glycan. The chain crosses the membrane as a helical span at residues 126–146 (VLFASKAILQLLVNPLSGPFI). The Cytoplasmic segment spans residues 147 to 152 (DRMSYD). Residues 153-173 (VPLLIGLGVMFASTVLFAFAE) form a helical membrane-spanning segment. At 174–182 (DYATLFAAR) the chain is on the lumenal, vesicle side. The chain crosses the membrane as a helical span at residues 183-203 (SLQGLGSAFADTSGIAMIADK). Topologically, residues 204–213 (YPEEPERSRA) are cytoplasmic. The chain crosses the membrane as a helical span at residues 214-234 (LGVALAFISFGSLVAPPFGGI). The Lumenal, vesicle segment spans residues 235–242 (LYEFAGKR). Residues 243–263 (VPFLVLAAVSLFDALLLLAVA) form a helical membrane-spanning segment. Residues 264 to 289 (KPFSAAARARANLPVGTPIHRLMLDP) are Cytoplasmic-facing. The chain crosses the membrane as a helical span at residues 290 to 310 (YIAVVAGALTTCNIPLAFLEP). At 311 to 325 (TIATWMKHTMAASEW) the chain is on the lumenal, vesicle side. Residues 326-346 (EMGMAWLPAFVPHVLGVYLTV) form a helical membrane-spanning segment. The Cytoplasmic portion of the chain corresponds to 347–356 (RLAARYPHLQ). The helical transmembrane segment at 357 to 377 (WLYGALGLAVIGASSCIVPAC) threads the bilayer. Residues 378-388 (RSFAPLVVSLC) lie on the Lumenal, vesicle side of the membrane. Residues 389–409 (GLCFGIALVDTALLPTLAFLV) traverse the membrane as a helical segment. The Cytoplasmic portion of the chain corresponds to 410 to 422 (DVRHVSVYGSVYA). The chain crosses the membrane as a helical span at residues 423-443 (IADISYSVAYALGPIVAGHIV). Residues 444-447 (HSLG) are Lumenal, vesicle-facing. A helical membrane pass occupies residues 448 to 468 (FEQLSLGMGLANLLYAPVLLL). Residues 469–532 (LRNVGLLTRS…DDYNYYYTRS (64 aa)) are Cytoplasmic-facing. The mediates interaction with SEC14L1 stretch occupies residues 471-532 (NVGLLTRSRS…DDYNYYYTRS (62 aa)). The tract at residues 502–523 (RPVSGQDGEPRSPPGPFDACED) is disordered.

Belongs to the major facilitator superfamily. Vesicular transporter family. Interacts with SEC14L1. Peripheral and central cholinergic nervous systems.

It localises to the cytoplasmic vesicle. The protein localises to the secretory vesicle. The protein resides in the synaptic vesicle membrane. The catalysed reaction is acetylcholine(out) + 2 H(+)(in) = acetylcholine(in) + 2 H(+)(out). The enzyme catalyses choline(in) + 2 H(+)(out) = choline(out) + 2 H(+)(in). It carries out the reaction serotonin(in) + 2 H(+)(out) = serotonin(out) + 2 H(+)(in). Potently inhibited by L-vesamicol, reserpine and tetrabenazine. Functionally, electrogenic antiporter that exchanges one cholinergic neurotransmitter, acetylcholine or choline, with two intravesicular protons across the membrane of synaptic vesicles. Uses the electrochemical proton gradient established by the V-type proton-pump ATPase to store neurotransmitters inside the vesicles prior to their release via exocytosis. Determines cholinergic vesicular quantal size at presynaptic nerve terminals in developing neuro-muscular junctions with an impact on motor neuron differentiation and innervation pattern. Part of forebrain cholinergic system, regulates hippocampal synapse transmissions that underlie spatial memory formation. Can transport serotonin. The chain is Vesicular acetylcholine transporter (SLC18A3) from Homo sapiens (Human).